Here is a 790-residue protein sequence, read N- to C-terminus: Phenylalanine--tRNA ligase beta subunit (790 aa).

The 110-residue stretch at 40–149 (AEKVSGVVVG…IDAPVGTDIN (110 aa)) folds into the tRNA-binding domain. The region spanning 402 to 479 (NKQIKINLSI…RIYGYSKLPE (78 aa)) is the B5 domain. The Mg(2+) site is built by Asp457, Asp463, Glu466, and Glu467. One can recognise an FDX-ACB domain in the interval 698 to 789 (SKYPSVSRDI…LKTKFNIEQR (92 aa)).

The protein belongs to the phenylalanyl-tRNA synthetase beta subunit family. Type 1 subfamily. In terms of assembly, tetramer of two alpha and two beta subunits. Mg(2+) serves as cofactor.

Its subcellular location is the cytoplasm. It carries out the reaction tRNA(Phe) + L-phenylalanine + ATP = L-phenylalanyl-tRNA(Phe) + AMP + diphosphate + H(+). In Francisella tularensis subsp. tularensis (strain SCHU S4 / Schu 4), this protein is Phenylalanine--tRNA ligase beta subunit.